A 461-amino-acid chain; its full sequence is Chromosomal replication initiator protein DnaA (461 aa).

The domain I, interacts with DnaA modulators stretch occupies residues 1 to 84 (MAVSLWQQCI…RFDIGSRPSA (84 aa)). Residues 84–124 (AKKFEPAPVATVRAPNTQTKATVGTYFNTQAEPIANANHRS) form a domain II region. Residues 125–341 (NINPTYQFDN…GALNRVIANA (217 aa)) are domain III, AAA+ region. Residues G169, G171, K172, and T173 each coordinate ATP. The domain IV, binds dsDNA stretch occupies residues 342–461 (NFTGRPITID…YANLIRTLSS (120 aa)).

The protein belongs to the DnaA family. Oligomerizes as a right-handed, spiral filament on DNA at oriC.

The protein localises to the cytoplasm. Plays an essential role in the initiation and regulation of chromosomal replication. ATP-DnaA binds to the origin of replication (oriC) to initiate formation of the DNA replication initiation complex once per cell cycle. Binds the DnaA box (a 9 base pair repeat at the origin) and separates the double-stranded (ds)DNA. Forms a right-handed helical filament on oriC DNA; dsDNA binds to the exterior of the filament while single-stranded (ss)DNA is stabiized in the filament's interior. The ATP-DnaA-oriC complex binds and stabilizes one strand of the AT-rich DNA unwinding element (DUE), permitting loading of DNA polymerase. After initiation quickly degrades to an ADP-DnaA complex that is not apt for DNA replication. Binds acidic phospholipids. This is Chromosomal replication initiator protein DnaA from Shewanella putrefaciens (strain CN-32 / ATCC BAA-453).